Here is a 294-residue protein sequence, read N- to C-terminus: MEFWGVEVKNGKPLHLDPGLDRLVHISQVALGESKNNVTEPIQLYVTVGSDKLLIGTLSHEKFPQLSTEIVLERNFALSHTWKNGSVFFSGYKVDASDPEPEDLIDDQLEAAGFKAAPKSAAKQVNFQLPNEDVKAKQDDDADGSEEDSSDDDDSENSGDEEEEKVTAESDSEEDDSSDDEEDDSSEEETPKKPEEPKKRSAEPNSSKNPASNKKAKFVTPQKTDSKKPHVHVATPHPSKQAGKNSGGGSTGETSKQQQTPKSAGAFGCKSCTRTFTSEMGLQSHTKAKHSAAA.

An N-acetylmethionine modification is found at Met-1. The tract at residues 2-5 (EFWG) is required to repress transcription. The segment at 124 to 269 (QVNFQLPNED…TPKSAGAFGC (146 aa)) is disordered. Acidic residues predominate over residues 140-188 (DDADGSEEDSSDDDDSENSGDEEEEKVTAESDSEEDDSSDDEEDDSSEE). Positions 189-202 (ETPKKPEEPKKRSA) are enriched in basic and acidic residues. The span at 203 to 213 (EPNSSKNPASN) shows a compositional bias: low complexity. Polar residues predominate over residues 252 to 262 (GETSKQQQTPK). Residues 267–290 (FGCKSCTRTFTSEMGLQSHTKAKH) form a C2H2-type zinc finger.

It belongs to the histone deacetylase HD2 family. In terms of assembly, interacts with DNMT2. As to expression, expressed in leaves, roots, stems, young plantlets, flowers and siliques. Highest levels in ovules, embryos, shoot apical meristems and first leaves. Also expressed in somatic embryos.

Its subcellular location is the nucleus. It localises to the nucleolus. Functionally, probably mediates the deacetylation of lysine residues on the N-terminal part of the core histones (H2A, H2B, H3 and H4). Histone deacetylation gives a tag for epigenetic repression and plays an important role in transcriptional regulation, cell cycle progression and developmental events. Involved in the modulation of abscisic acid and stress-responsive genes. This Arabidopsis thaliana (Mouse-ear cress) protein is Histone deacetylase HDT3 (HDT3).